The chain runs to 2289 residues: Protein Ycf2 (2289 aa).

1643-1650 is a binding site for ATP; it reads GSIGTGRS.

This sequence belongs to the Ycf2 family.

The protein localises to the plastid. It is found in the chloroplast stroma. In terms of biological role, probable ATPase of unknown function. Its presence in a non-photosynthetic plant (Epifagus virginiana) and experiments in tobacco indicate that it has an essential function which is probably not related to photosynthesis. This chain is Protein Ycf2, found in Capsella bursa-pastoris (Shepherd's purse).